Here is a 414-residue protein sequence, read N- to C-terminus: Dihydroorotase (414 aa).

Residues His57 and His59 each coordinate Zn(2+). Substrate-binding positions include 59-61 (HLR) and Asn91. Zn(2+) contacts are provided by Lys135, His164, His204, and Asp272. The residue at position 135 (Lys135) is an N6-carboxylysine. Asp272 is an active-site residue. Substrate-binding positions include His276 and 286-287 (AG).

Belongs to the metallo-dependent hydrolases superfamily. DHOase family. Class I DHOase subfamily. It depends on Zn(2+) as a cofactor.

The enzyme catalyses (S)-dihydroorotate + H2O = N-carbamoyl-L-aspartate + H(+). It participates in pyrimidine metabolism; UMP biosynthesis via de novo pathway; (S)-dihydroorotate from bicarbonate: step 3/3. Its function is as follows. Catalyzes the reversible cyclization of carbamoyl aspartate to dihydroorotate. This is Dihydroorotase from Pyrococcus furiosus (strain ATCC 43587 / DSM 3638 / JCM 8422 / Vc1).